We begin with the raw amino-acid sequence, 307 residues long: Pantothenate kinase (307 aa).

90–97 (GSVAVGKS) provides a ligand contact to ATP.

Belongs to the prokaryotic pantothenate kinase family.

It is found in the cytoplasm. The catalysed reaction is (R)-pantothenate + ATP = (R)-4'-phosphopantothenate + ADP + H(+). It functions in the pathway cofactor biosynthesis; coenzyme A biosynthesis; CoA from (R)-pantothenate: step 1/5. The polypeptide is Pantothenate kinase (Limosilactobacillus reuteri subsp. reuteri (strain JCM 1112) (Lactobacillus reuteri)).